The chain runs to 1587 residues: DNA topoisomerase 2 (1587 aa).

A compositionally biased stretch (acidic residues) spans 1–15 (MSDADPFDMSDDDDN). The interval 1–47 (MSDADPFDMSDDDDNSVLSHTPPKKQKKAPTTKKGGSKPLADVENES) is disordered. Basic residues predominate over residues 22 to 31 (PPKKQKKAPT). ATP contacts are provided by residues asparagine 126, asparagine 155, 183–185 (SSN), and 196–203 (GRNGFGAK). Interaction with DNA regions lie at residues 381–383 (KKK) and 381–386 (KKKNKN). 415 to 417 (QTK) provides a ligand contact to ATP. Positions 461–485 (MLKKTDGGRRSRMNNPKLTDANKAG) are disordered. A Toprim domain is found at 492 to 606 (CTLILTEGDS…SLLKIPEFLI (115 aa)). Glutamate 498, aspartate 575, and aspartate 577 together coordinate Mg(2+). Positions 743–1190 (IPSVVDGLKP…SKEDIWKRDL (448 aa)) constitute a Topo IIA-type catalytic domain. Residue tyrosine 833 is the O-(5'-phospho-DNA)-tyrosine intermediate of the active site. An interaction with DNA region spans residues 1016-1025 (KLSKTMTTTN). Positions 1204–1587 (EARRQRKVAN…PRPRRPRRRS (384 aa)) are disordered. Positions 1271–1280 (LSFLGKSSAK) are enriched in low complexity. Residues 1308–1320 (PKSEPKADPKPKD) are compositionally biased toward basic and acidic residues. The segment covering 1321–1334 (EDEDIVMEDSDIEE) has biased composition (acidic residues). Basic and acidic residues predominate over residues 1348–1364 (VKPESEDGQAKIAEAPK). Residues 1365-1375 (RGRAAAKPKPK) are compositionally biased toward basic residues. 2 stretches are compositionally biased toward acidic residues: residues 1379–1391 (EDEE…DDFM) and 1419–1430 (SDSDSDNGDDLL). Composition is skewed to polar residues over residues 1441 to 1451 (GSTNGASTSDS) and 1466 to 1475 (GLKTTASKAS). The span at 1512-1521 (DNEPEDDDDE) shows a compositional bias: acidic residues. The segment covering 1524-1542 (KPAAKGKAAAKGKSTAAAA) has biased composition (low complexity). Residues 1558-1568 (PKPPPRLPCPL) are compositionally biased toward pro residues. Positions 1571-1587 (RRTHRSNPRPRRPRRRS) are enriched in basic residues.

This sequence belongs to the type II topoisomerase family. In terms of assembly, homodimer. The cofactor is Mg(2+). It depends on Mn(2+) as a cofactor. Requires Ca(2+) as cofactor.

The protein resides in the nucleus. It carries out the reaction ATP-dependent breakage, passage and rejoining of double-stranded DNA.. Its function is as follows. Control of topological states of DNA by transient breakage and subsequent rejoining of DNA strands. Topoisomerase II makes double-strand breaks. The protein is DNA topoisomerase 2 (TOP2) of Penicillium chrysogenum (Penicillium notatum).